The sequence spans 224 residues: ATP-dependent dethiobiotin synthetase BioD (224 aa).

Gly-12–Phe-17 provides a ligand contact to ATP. Thr-16 lines the Mg(2+) pocket. Lys-37 is an active-site residue. Thr-41 contributes to the substrate binding site. Glu-107 provides a ligand contact to Mg(2+). ATP contacts are provided by residues Glu-107–Gly-110, Gly-167–Ser-168, Pro-197–Gly-199, and Glu-204.

Belongs to the dethiobiotin synthetase family. In terms of assembly, homodimer. Mg(2+) is required as a cofactor.

The protein resides in the cytoplasm. The catalysed reaction is (7R,8S)-7,8-diammoniononanoate + CO2 + ATP = (4R,5S)-dethiobiotin + ADP + phosphate + 3 H(+). Its pathway is cofactor biosynthesis; biotin biosynthesis; biotin from 7,8-diaminononanoate: step 1/2. Catalyzes a mechanistically unusual reaction, the ATP-dependent insertion of CO2 between the N7 and N8 nitrogen atoms of 7,8-diaminopelargonic acid (DAPA, also called 7,8-diammoniononanoate) to form a ureido ring. The chain is ATP-dependent dethiobiotin synthetase BioD from Corynebacterium glutamicum (strain R).